We begin with the raw amino-acid sequence, 321 residues long: Ribose-phosphate pyrophosphokinase (321 aa).

ATP-binding positions include 44-46 (DGE) and 103-104 (RQ). Mg(2+) is bound by residues histidine 137 and aspartate 179. Lysine 202 is a catalytic residue. D-ribose 5-phosphate-binding positions include arginine 204, aspartate 228, and 232-236 (DTAGT).

This sequence belongs to the ribose-phosphate pyrophosphokinase family. Class I subfamily. In terms of assembly, homohexamer. Mg(2+) is required as a cofactor.

The protein resides in the cytoplasm. It catalyses the reaction D-ribose 5-phosphate + ATP = 5-phospho-alpha-D-ribose 1-diphosphate + AMP + H(+). Its pathway is metabolic intermediate biosynthesis; 5-phospho-alpha-D-ribose 1-diphosphate biosynthesis; 5-phospho-alpha-D-ribose 1-diphosphate from D-ribose 5-phosphate (route I): step 1/1. Involved in the biosynthesis of the central metabolite phospho-alpha-D-ribosyl-1-pyrophosphate (PRPP) via the transfer of pyrophosphoryl group from ATP to 1-hydroxyl of ribose-5-phosphate (Rib-5-P). This is Ribose-phosphate pyrophosphokinase from Staphylococcus aureus (strain COL).